The chain runs to 201 residues: MDIKACYQNAKALLEGHFLLSSGFHSNYYLQSAKVLEDPKLAEQLALELAKQIQEAHLNIECVCSPAIGGILAGYELARALGVRFIFTERVDNTMALRRGFEVKKNEKILVCEDIITTGKSAMECAKVLEEKGAQIVAFGALANRGICKRAHSHLKAQEGACLPSHLPLFALEDFVFDMHKPSSCPLCATSVAIKPGSRGN.

5-phospho-alpha-D-ribose 1-diphosphate is bound at residue 113–121 (EDIITTGKS). Residues threonine 117 and arginine 145 each coordinate orotate.

It belongs to the purine/pyrimidine phosphoribosyltransferase family. PyrE subfamily. In terms of assembly, homodimer. Mg(2+) serves as cofactor.

The enzyme catalyses orotidine 5'-phosphate + diphosphate = orotate + 5-phospho-alpha-D-ribose 1-diphosphate. The protein operates within pyrimidine metabolism; UMP biosynthesis via de novo pathway; UMP from orotate: step 1/2. Its function is as follows. Catalyzes the transfer of a ribosyl phosphate group from 5-phosphoribose 1-diphosphate to orotate, leading to the formation of orotidine monophosphate (OMP). This chain is Orotate phosphoribosyltransferase, found in Helicobacter pylori (strain ATCC 700392 / 26695) (Campylobacter pylori).